The following is a 177-amino-acid chain: Adenine phosphoribosyltransferase (177 aa).

The protein belongs to the purine/pyrimidine phosphoribosyltransferase family. In terms of assembly, homodimer.

It is found in the cytoplasm. It carries out the reaction AMP + diphosphate = 5-phospho-alpha-D-ribose 1-diphosphate + adenine. Its pathway is purine metabolism; AMP biosynthesis via salvage pathway; AMP from adenine: step 1/1. Its function is as follows. Catalyzes a salvage reaction resulting in the formation of AMP, that is energically less costly than de novo synthesis. In Chlorobaculum parvum (strain DSM 263 / NCIMB 8327) (Chlorobium vibrioforme subsp. thiosulfatophilum), this protein is Adenine phosphoribosyltransferase.